Here is a 204-residue protein sequence, read N- to C-terminus: Tat proofreading chaperone DmsD (204 aa).

It belongs to the TorD/DmsD family. DmsD subfamily.

Functionally, required for biogenesis/assembly of DMSO reductase, but not for the interaction of the DmsA signal peptide with the Tat system. May be part of a chaperone cascade complex that facilitates a folding-maturation pathway for the substrate protein. The chain is Tat proofreading chaperone DmsD from Salmonella paratyphi A (strain ATCC 9150 / SARB42).